The sequence spans 171 residues: NADH-quinone oxidoreductase subunit I (171 aa).

4Fe-4S ferredoxin-type domains lie at 41 to 71 (LTRDPDGEERCVACNLCAAVCPVDCIALQKT) and 81 to 110 (EFFRINFSRCILCGLCEEACPTYAIQLTPD). 8 residues coordinate [4Fe-4S] cluster: Cys-51, Cys-54, Cys-57, Cys-61, Cys-90, Cys-93, Cys-96, and Cys-100.

It belongs to the complex I 23 kDa subunit family. As to quaternary structure, NDH-1 is composed of 14 different subunits. Subunits NuoA, H, J, K, L, M, N constitute the membrane sector of the complex. It depends on [4Fe-4S] cluster as a cofactor.

The protein localises to the cell inner membrane. It catalyses the reaction a quinone + NADH + 5 H(+)(in) = a quinol + NAD(+) + 4 H(+)(out). Functionally, NDH-1 shuttles electrons from NADH, via FMN and iron-sulfur (Fe-S) centers, to quinones in the respiratory chain. The immediate electron acceptor for the enzyme in this species is believed to be ubiquinone. Couples the redox reaction to proton translocation (for every two electrons transferred, four hydrogen ions are translocated across the cytoplasmic membrane), and thus conserves the redox energy in a proton gradient. This chain is NADH-quinone oxidoreductase subunit I, found in Methylococcus capsulatus (strain ATCC 33009 / NCIMB 11132 / Bath).